The chain runs to 250 residues: DSC E3 ubiquitin ligase complex subunit 3 (250 aa).

Residues 105–130 (LASQDQAQSGLNSNSESPDDLQNAQT) are disordered. A compositionally biased stretch (polar residues) spans 107–130 (SQDQAQSGLNSNSESPDDLQNAQT). Asn187 carries N-linked (GlcNAc...) asparagine glycosylation. A run of 2 helical transmembrane segments spans residues 199 to 219 (TLLA…YFLW) and 228 to 248 (MQLS…LHSY).

This sequence belongs to the dsc3 family. In terms of assembly, component of the DSC E3 ubiquitin ligase complex composed of dsc1, dsc2, dsc3 and dsc4.

Its subcellular location is the endoplasmic reticulum membrane. It localises to the golgi apparatus membrane. The protein operates within protein modification; protein ubiquitination. In terms of biological role, component of the DSC E3 ubiquitin ligase complex which is required for the sre1 transcriptional activator proteolytic cleavage to release the soluble transcription factor from the membrane in low oxygen or sterol conditions. The complex also plays an important role in the multivesicular body (MVB) pathway and functions in a post-endoplasmic reticulum pathway for protein degradation. The polypeptide is DSC E3 ubiquitin ligase complex subunit 3 (dsc3) (Schizosaccharomyces pombe (strain 972 / ATCC 24843) (Fission yeast)).